A 215-amino-acid polypeptide reads, in one-letter code: N-(5'-phosphoribosyl)anthranilate isomerase (215 aa).

The protein belongs to the TrpF family.

The enzyme catalyses N-(5-phospho-beta-D-ribosyl)anthranilate = 1-(2-carboxyphenylamino)-1-deoxy-D-ribulose 5-phosphate. Its pathway is amino-acid biosynthesis; L-tryptophan biosynthesis; L-tryptophan from chorismate: step 3/5. This chain is N-(5'-phosphoribosyl)anthranilate isomerase, found in Ruegeria sp. (strain TM1040) (Silicibacter sp.).